The chain runs to 478 residues: RNA pseudouridine synthase 3, mitochondrial (478 aa).

Residues 1–20 (MWKAKTCFRQIYLTVLIRRY) constitute a mitochondrion transit peptide. An S4 RNA-binding domain is found at 92–162 (EEIYDKAIQT…MRISKRYDTI (71 aa)). Residue Asp232 is part of the active site.

Belongs to the pseudouridine synthase RluA family.

It localises to the mitochondrion. It catalyses the reaction a uridine in RNA = a pseudouridine in RNA. The protein is RNA pseudouridine synthase 3, mitochondrial of Arabidopsis thaliana (Mouse-ear cress).